The chain runs to 1498 residues: Rap guanine nucleotide exchange factor 2 (1498 aa).

2 disordered regions span residues 40-59 (HVSS…SSSL) and 68-101 (SEAG…SDPL). Positions 83-94 (VDSEDDDDEEDI) are enriched in acidic residues. 135-252 (AFANMTMSVR…QKVEEEGEIV (118 aa)) lines the a nucleoside 3',5'-cyclic phosphate pocket. Residues 267–380 (KGHIVIKGTS…RLLNIACAAK (114 aa)) enclose the N-terminal Ras-GEF domain. One can recognise a PDZ domain in the interval 385-468 (LMTLTKPSRE…LSITVKTNLF (84 aa)). Serine 501 is modified (phosphoserine). The region spanning 606 to 692 (PDQVLRVFKA…GRYYLKNNME (87 aa)) is the Ras-associating domain. Residue threonine 644 is modified to Phosphothreonine. The Ras-GEF domain occupies 717-944 (STVEVATQLS…SQGSTNATVL (228 aa)). 11 positions are modified to phosphoserine: serine 806, serine 930, serine 933, serine 1022, serine 1079, serine 1088, serine 1094, serine 1115, serine 1119, serine 1158, and serine 1175. The segment at 1002-1048 (PATNTLPKNPGDKKPVKSETSPVAPRAGSQQKAQAQPPPPQPQPQHK) is disordered. The tract at residues 1094-1159 (SLERHKKQAE…RSSIVSNSSF (66 aa)) is disordered. Composition is skewed to low complexity over residues 1110–1124 (SSQL…QSSP) and 1140–1159 (SDSG…NSSF). 3 disordered regions span residues 1224 to 1257 (STEE…GSHD), 1304 to 1371 (TKYN…TKPV), and 1392 to 1498 (EGRY…VSAV). 2 stretches are compositionally biased toward polar residues: residues 1246 to 1257 (GSWTSCSSGSHD) and 1306 to 1330 (YNRQ…SSTG). Low complexity predominate over residues 1354-1365 (EAESSSVTSVTT). Positions 1487-1498 (TEEDEDEQVSAV) are enriched in acidic residues.

This sequence belongs to the RAPGEF2 family. As to quaternary structure, found in a complex, at least composed of KIDINS220, MAGI2, NTRK1 and RAPGEF2; the complex is mainly formed at late endosomes in a neuronal growth factor (NGF)-dependent manner. Interacts (via C-terminal domain) with NEDD4 (via WW domains); this interaction leads to ubiquitination and degradation via the proteasome pathway in a cAMP-independent manner. Interacts with MAGI1 (via PDZ domain). Interacts with ADRB1 (via C-terminal PDZ motif); the interaction is direct. Interacts (via Ras-associating domain) with RAP1A (via GTP-bound active form). Interacts weakly with HRAS (via GDP- and GTP-bound forms). Interacts (via C-terminal domain) with MAGI2 (via PDZ and WW domains). Interacts with CDH1, CTNNB1 and TJP1. Ubiquitinated by NEDD4, leading to proteasomal degradation. Post-translationally, phosphorylation by PLK2 promotes its activity.

The protein localises to the cell junction. It localises to the cytoplasm. It is found in the perinuclear region. The protein resides in the cell membrane. Its subcellular location is the late endosome. In terms of biological role, functions as a guanine nucleotide exchange factor (GEF), which activates Rap and Ras family of small GTPases by exchanging bound GDP for free GTP in a cAMP-dependent manner. Serves as a link between cell surface receptors and Rap/Ras GTPases in intracellular signaling cascades. Also acts as an effector for Rap1 by direct association with Rap1-GTP thereby leading to the amplification of Rap1-mediated signaling. Shows weak activity on HRAS. It is controversial whether RAPGEF2 binds cAMP and cGMP or not. Its binding to ligand-activated beta-1 adrenergic receptor ADRB1 leads to the Ras activation through the G(s)-alpha signaling pathway. Involved in the cAMP-induced Ras and Erk1/2 signaling pathway that leads to sustained inhibition of long term melanogenesis by reducing dendrite extension and melanin synthesis. Also provides inhibitory signals for cell proliferation of melanoma cells and promotes their apoptosis in a cAMP-independent nanner. Regulates cAMP-induced neuritogenesis by mediating the Rap1/B-Raf/ERK signaling through a pathway that is independent on both PKA and RAPGEF3/RAPGEF4. Involved in neuron migration and in the formation of the major forebrain fiber connections forming the corpus callosum, the anterior commissure and the hippocampal commissure during brain development. Involved in neuronal growth factor (NGF)-induced sustained activation of Rap1 at late endosomes and in brain-derived neurotrophic factor (BDNF)-induced axon outgrowth of hippocampal neurons. Plays a role in the regulation of embryonic blood vessel formation and in the establishment of basal junction integrity and endothelial barrier function. May be involved in the regulation of the vascular endothelial growth factor receptor KDR and cadherin CDH5 expression at allantois endothelial cell-cell junctions. This chain is Rap guanine nucleotide exchange factor 2 (RAPGEF2), found in Canis lupus familiaris (Dog).